Here is a 187-residue protein sequence, read N- to C-terminus: MADTTDFKNGLVLKIDNKLQQIVEFQHVKPGKGPAFVRTKLKDVVSGKVTDKTFNAGVKVETANVDRRDMTYLYNDGQNYVVMDDKTYEQYELPFDKFGDAGKFLLENMRVQVSFHDGEALFGELPISVDLKVEHTEPGLQGDRSNGGTKPATLETGAEIQVPLFIETGNTLKIDTRTGEYLSRVNN.

Belongs to the elongation factor P family.

It localises to the cytoplasm. The protein operates within protein biosynthesis; polypeptide chain elongation. Functionally, involved in peptide bond synthesis. Stimulates efficient translation and peptide-bond synthesis on native or reconstituted 70S ribosomes in vitro. Probably functions indirectly by altering the affinity of the ribosome for aminoacyl-tRNA, thus increasing their reactivity as acceptors for peptidyl transferase. This Corynebacterium aurimucosum (strain ATCC 700975 / DSM 44827 / CIP 107346 / CN-1) (Corynebacterium nigricans) protein is Elongation factor P.